The chain runs to 426 residues: UDP-N-acetylglucosamine 1-carboxyvinyltransferase (426 aa).

A phosphoenolpyruvate-binding site is contributed by 22–23 (KN). Arg-94 provides a ligand contact to UDP-N-acetyl-alpha-D-glucosamine. Cys-118 functions as the Proton donor in the catalytic mechanism. At Cys-118 the chain carries 2-(S-cysteinyl)pyruvic acid O-phosphothioketal. UDP-N-acetyl-alpha-D-glucosamine-binding positions include 123 to 127 (RPVDL), Asp-310, and Ile-332.

The protein belongs to the EPSP synthase family. MurA subfamily.

Its subcellular location is the cytoplasm. The enzyme catalyses phosphoenolpyruvate + UDP-N-acetyl-alpha-D-glucosamine = UDP-N-acetyl-3-O-(1-carboxyvinyl)-alpha-D-glucosamine + phosphate. The protein operates within cell wall biogenesis; peptidoglycan biosynthesis. Functionally, cell wall formation. Adds enolpyruvyl to UDP-N-acetylglucosamine. The sequence is that of UDP-N-acetylglucosamine 1-carboxyvinyltransferase from Hyphomonas neptunium (strain ATCC 15444).